The primary structure comprises 66 residues: Conotoxin Cal5.2 (66 aa).

A signal peptide spans 1–20 (MMYCLPVVCILLLLIPSSAT). The propeptide occupies 21 to 51 (FVVESRLEKDQAQSFTGDAWKRVSPIHEMIQ). Valine amide is present on V65.

This sequence belongs to the conotoxin T superfamily. Post-translationally, contains 2 disulfide bonds that can be either 'C1-C3, C2-C4' or 'C1-C4, C2-C3', since these disulfide connectivities have been observed for conotoxins with cysteine framework V (for examples, see AC P0DQQ7 and AC P81755). As to expression, expressed by the venom duct.

The protein resides in the secreted. Functionally, probable neurotoxin with unknown target. Possibly targets ion channels. This is Conotoxin Cal5.2 from Californiconus californicus (California cone).